A 33-amino-acid polypeptide reads, in one-letter code: Helofensin-1 (33 aa).

The protein belongs to the beta-defensin family. Helofensin subfamily. As to expression, expressed by the venom gland.

The protein resides in the secreted. Functionally, lethal toxin which possesses an inhibitory effect on direct electrical stimulation of the isolated hemi-diaphragm. Neither hemorrhagic nor hemolytic activities are detected. Phospholipase A2 activity, proteolytic activity and arginine esterolytic activity are absent. The polypeptide is Helofensin-1 (Heloderma horridum horridum (Mexican beaded lizard)).